The chain runs to 306 residues: Dermonecrotic toxin LiSicTox-alphaIA2ai (306 aa).

The N-terminal stretch at 1 to 18 (MLPYIALILVCWSVLSQA) is a signal peptide. Positions 19 to 26 (AQTDVEGR) are excised as a propeptide. Histidine 38 is a catalytic residue. Residues glutamate 58 and aspartate 60 each coordinate Mg(2+). Histidine 74 (nucleophile) is an active-site residue. Cystine bridges form between cysteine 78-cysteine 84 and cysteine 80-cysteine 223. Aspartate 118 lines the Mg(2+) pocket. A glycan (N-linked (GlcNAc...) asparagine) is linked at asparagine 283.

The protein belongs to the arthropod phospholipase D family. Class II subfamily. Class IIa sub-subfamily. It depends on Mg(2+) as a cofactor. As to expression, expressed by the venom gland.

It localises to the secreted. It carries out the reaction an N-(acyl)-sphingosylphosphocholine = an N-(acyl)-sphingosyl-1,3-cyclic phosphate + choline. The enzyme catalyses an N-(acyl)-sphingosylphosphoethanolamine = an N-(acyl)-sphingosyl-1,3-cyclic phosphate + ethanolamine. It catalyses the reaction a 1-acyl-sn-glycero-3-phosphocholine = a 1-acyl-sn-glycero-2,3-cyclic phosphate + choline. The catalysed reaction is a 1-acyl-sn-glycero-3-phosphoethanolamine = a 1-acyl-sn-glycero-2,3-cyclic phosphate + ethanolamine. Functionally, dermonecrotic toxins cleave the phosphodiester linkage between the phosphate and headgroup of certain phospholipids (sphingolipid and lysolipid substrates), forming an alcohol (often choline) and a cyclic phosphate. This toxin acts on sphingomyelin (SM). It may also act on ceramide phosphoethanolamine (CPE), lysophosphatidylcholine (LPC) and lysophosphatidylethanolamine (LPE), but not on lysophosphatidylserine (LPS), and lysophosphatidylglycerol (LPG). It acts by transphosphatidylation, releasing exclusively cyclic phosphate products as second products. It induces complement-dependent hemolysis, dermonecrosis, vascular permeability and platelet aggregation. The protein is Dermonecrotic toxin LiSicTox-alphaIA2ai of Loxosceles intermedia (Brown spider).